A 342-amino-acid chain; its full sequence is Glyceraldehyde-3-phosphate dehydrogenase (342 aa).

Residues 12–13 (RI), Asp34, Lys78, and Thr120 each bind NAD(+). D-glyceraldehyde 3-phosphate-binding positions include 151–153 (SCT) and Thr182. The active-site Nucleophile is the Cys152. Residue Asn183 participates in NAD(+) binding. Residues Arg197, 210–211 (TG), and Arg233 contribute to the D-glyceraldehyde 3-phosphate site. NAD(+) is bound at residue Asn322.

The protein belongs to the glyceraldehyde-3-phosphate dehydrogenase family. Homotetramer.

The protein localises to the cytoplasm. It carries out the reaction D-glyceraldehyde 3-phosphate + phosphate + NAD(+) = (2R)-3-phospho-glyceroyl phosphate + NADH + H(+). Its pathway is carbohydrate degradation; glycolysis; pyruvate from D-glyceraldehyde 3-phosphate: step 1/5. Catalyzes the oxidative phosphorylation of glyceraldehyde 3-phosphate (G3P) to 1,3-bisphosphoglycerate (BPG) using the cofactor NAD. The first reaction step involves the formation of a hemiacetal intermediate between G3P and a cysteine residue, and this hemiacetal intermediate is then oxidized to a thioester, with concomitant reduction of NAD to NADH. The reduced NADH is then exchanged with the second NAD, and the thioester is attacked by a nucleophilic inorganic phosphate to produce BPG. The sequence is that of Glyceraldehyde-3-phosphate dehydrogenase (gap) from Aquifex aeolicus (strain VF5).